Here is a 197-residue protein sequence, read N- to C-terminus: Holliday junction branch migration complex subunit RuvA (197 aa).

A domain I region spans residues 1–64 (MIASIRGILI…EDSLTLYGFE (64 aa)). The interval 65 to 145 (TVEQRQLFET…GLPTGAAVTP (81 aa)) is domain II. The tract at residues 146–148 (AVA) is flexible linker. Positions 148-197 (AAANAELSEALISLGFTDAEAAAAIAALPSDAPPDLEERVRLALRYFSAS) are domain III.

The protein belongs to the RuvA family. In terms of assembly, homotetramer. Forms an RuvA(8)-RuvB(12)-Holliday junction (HJ) complex. HJ DNA is sandwiched between 2 RuvA tetramers; dsDNA enters through RuvA and exits via RuvB. An RuvB hexamer assembles on each DNA strand where it exits the tetramer. Each RuvB hexamer is contacted by two RuvA subunits (via domain III) on 2 adjacent RuvB subunits; this complex drives branch migration. In the full resolvosome a probable DNA-RuvA(4)-RuvB(12)-RuvC(2) complex forms which resolves the HJ.

The protein localises to the cytoplasm. Functionally, the RuvA-RuvB-RuvC complex processes Holliday junction (HJ) DNA during genetic recombination and DNA repair, while the RuvA-RuvB complex plays an important role in the rescue of blocked DNA replication forks via replication fork reversal (RFR). RuvA specifically binds to HJ cruciform DNA, conferring on it an open structure. The RuvB hexamer acts as an ATP-dependent pump, pulling dsDNA into and through the RuvAB complex. HJ branch migration allows RuvC to scan DNA until it finds its consensus sequence, where it cleaves and resolves the cruciform DNA. The protein is Holliday junction branch migration complex subunit RuvA of Roseiflexus sp. (strain RS-1).